The sequence spans 307 residues: Glutaminase 1 (307 aa).

Substrate is bound by residues S62, N114, E159, N166, Y190, Y242, and V260.

It belongs to the glutaminase family. As to quaternary structure, homotetramer.

It carries out the reaction L-glutamine + H2O = L-glutamate + NH4(+). The polypeptide is Glutaminase 1 (Clostridium perfringens (strain 13 / Type A)).